A 330-amino-acid polypeptide reads, in one-letter code: MHFIDEVKIYIKGGNGGNGCVSFHREKFIDRGGPDGGDGGRGGSVIFRSNHHLNTLVNYRYKQHFTAENGENGKDSNRSGKSGKSLVLDVPIGTQIFSEDGNILFYDFTVDDQSFEIIKGGSGGLGNSHFKSSVNQAPRKRTEGEIAEEMWIHLSLKLLSDVGLVGLPNAGKSTFLSVVTAAKPKIADYPFTTLVPNLGVVYVDDEEFVIADIPGLIEGAHQGHGLGDKFLKHIERCNVLIHLIDGSSNDVVADYNTVRLELELYSDYLKNKIETICLNKCDVLTDEEIQEKINKLQKATNKEIFPISTCTNAGVNKIVKLALETIKNQK.

The Obg domain occupies 1 to 159 (MHFIDEVKIY…MWIHLSLKLL (159 aa)). The OBG-type G domain maps to 160-327 (SDVGLVGLPN…IVKLALETIK (168 aa)). GTP-binding positions include 166–173 (GLPNAGKS), 191–195 (FTTLV), 212–215 (DIPG), 279–282 (NKCD), and 308–310 (STC). 2 residues coordinate Mg(2+): Ser173 and Thr193.

It belongs to the TRAFAC class OBG-HflX-like GTPase superfamily. OBG GTPase family. As to quaternary structure, monomer. It depends on Mg(2+) as a cofactor.

The protein localises to the cytoplasm. In terms of biological role, an essential GTPase which binds GTP, GDP and possibly (p)ppGpp with moderate affinity, with high nucleotide exchange rates and a fairly low GTP hydrolysis rate. Plays a role in control of the cell cycle, stress response, ribosome biogenesis and in those bacteria that undergo differentiation, in morphogenesis control. This Rickettsia conorii (strain ATCC VR-613 / Malish 7) protein is GTPase Obg.